Consider the following 109-residue polypeptide: MEMDLNNRLTEDETLEQAYDIFLELAADNLDPADIILFNLQFEERGGAELFDPAEDWQEHIDFDLNPDFFAEVVIGLADTEDGEINDIFARVLLCREKDHKLCHILWRE.

The protein belongs to the putative dsDNA mimic protein family.

Functionally, may act as a double-stranded DNA (dsDNA) mimic. Probably regulates the activity of a dsDNA-binding protein. This chain is Putative double-stranded DNA mimic protein YciU, found in Salmonella paratyphi B (strain ATCC BAA-1250 / SPB7).